Consider the following 539-residue polypeptide: 2-isopropylmalate synthase (539 aa).

Residues 8 to 269 (VLIFDTTLRD…YFNPFFGRPP (262 aa)) form the Pyruvate carboxyltransferase domain. D17, H208, H210, and N244 together coordinate Mn(2+). The segment at 408-539 (QLKLVQVSCG…DLAKVEKKGI (132 aa)) is regulatory domain.

This sequence belongs to the alpha-IPM synthase/homocitrate synthase family. LeuA type 1 subfamily. Homodimer. It depends on Mn(2+) as a cofactor.

Its subcellular location is the cytoplasm. The catalysed reaction is 3-methyl-2-oxobutanoate + acetyl-CoA + H2O = (2S)-2-isopropylmalate + CoA + H(+). It participates in amino-acid biosynthesis; L-leucine biosynthesis; L-leucine from 3-methyl-2-oxobutanoate: step 1/4. In terms of biological role, catalyzes the condensation of the acetyl group of acetyl-CoA with 3-methyl-2-oxobutanoate (2-ketoisovalerate) to form 3-carboxy-3-hydroxy-4-methylpentanoate (2-isopropylmalate). This Prochlorococcus marinus (strain NATL2A) protein is 2-isopropylmalate synthase.